A 426-amino-acid chain; its full sequence is 3-phosphoshikimate 1-carboxyvinyltransferase (426 aa).

Lys20, Ser21, and Arg25 together coordinate 3-phosphoshikimate. Lys20 is a phosphoenolpyruvate binding site. 2 residues coordinate phosphoenolpyruvate: Gly92 and Arg120. 3-phosphoshikimate is bound by residues Ser166, Gln168, Asp312, and Lys339. Gln168 provides a ligand contact to phosphoenolpyruvate. Asp312 functions as the Proton acceptor in the catalytic mechanism. Arg385 serves as a coordination point for phosphoenolpyruvate.

This sequence belongs to the EPSP synthase family. In terms of assembly, monomer.

Its subcellular location is the cytoplasm. It carries out the reaction 3-phosphoshikimate + phosphoenolpyruvate = 5-O-(1-carboxyvinyl)-3-phosphoshikimate + phosphate. It participates in metabolic intermediate biosynthesis; chorismate biosynthesis; chorismate from D-erythrose 4-phosphate and phosphoenolpyruvate: step 6/7. Catalyzes the transfer of the enolpyruvyl moiety of phosphoenolpyruvate (PEP) to the 5-hydroxyl of shikimate-3-phosphate (S3P) to produce enolpyruvyl shikimate-3-phosphate and inorganic phosphate. In Streptococcus suis (strain 98HAH33), this protein is 3-phosphoshikimate 1-carboxyvinyltransferase.